Here is a 209-residue protein sequence, read N- to C-terminus: Uracil phosphoribosyltransferase (209 aa).

5-phospho-alpha-D-ribose 1-diphosphate-binding positions include Arg79, Arg104, and 131–139 (DPMLATGVS). Residues Ile194 and 199-201 (GDA) each bind uracil. A 5-phospho-alpha-D-ribose 1-diphosphate-binding site is contributed by Asp200.

It belongs to the UPRTase family. Mg(2+) serves as cofactor.

It carries out the reaction UMP + diphosphate = 5-phospho-alpha-D-ribose 1-diphosphate + uracil. It functions in the pathway pyrimidine metabolism; UMP biosynthesis via salvage pathway; UMP from uracil: step 1/1. Allosterically activated by GTP. Its function is as follows. Catalyzes the conversion of uracil and 5-phospho-alpha-D-ribose 1-diphosphate (PRPP) to UMP and diphosphate. The chain is Uracil phosphoribosyltransferase from Thermotoga neapolitana (strain ATCC 49049 / DSM 4359 / NBRC 107923 / NS-E).